We begin with the raw amino-acid sequence, 295 residues long: Indole-3-glycerol phosphate synthase (295 aa).

This sequence belongs to the TrpC family.

It catalyses the reaction 1-(2-carboxyphenylamino)-1-deoxy-D-ribulose 5-phosphate + H(+) = (1S,2R)-1-C-(indol-3-yl)glycerol 3-phosphate + CO2 + H2O. Its pathway is amino-acid biosynthesis; L-tryptophan biosynthesis; L-tryptophan from chorismate: step 4/5. This chain is Indole-3-glycerol phosphate synthase, found in Prochlorococcus marinus (strain NATL1A).